The chain runs to 448 residues: Argininosuccinate synthase (448 aa).

Residues alanine 17–serine 25 and alanine 43 contribute to the ATP site. Tyrosine 99 contacts L-citrulline. Positions 129 and 131 each coordinate ATP. Residues threonine 131, asparagine 135, and aspartate 136 each coordinate L-aspartate. L-citrulline is bound at residue asparagine 135. Aspartate 136 is a binding site for ATP. 2 residues coordinate L-citrulline: arginine 139 and serine 192. Aspartate 194 is an ATP binding site. Residues threonine 201, glutamate 203, and glutamate 280 each coordinate L-citrulline.

This sequence belongs to the argininosuccinate synthase family. Type 2 subfamily. Homotetramer.

The protein localises to the cytoplasm. The catalysed reaction is L-citrulline + L-aspartate + ATP = 2-(N(omega)-L-arginino)succinate + AMP + diphosphate + H(+). Its pathway is amino-acid biosynthesis; L-arginine biosynthesis; L-arginine from L-ornithine and carbamoyl phosphate: step 2/3. The sequence is that of Argininosuccinate synthase from Enterobacter sp. (strain 638).